The sequence spans 132 residues: Fluoride-specific ion channel FluC (132 aa).

A run of 4 helical transmembrane segments spans residues 5–25, 36–56, 68–88, and 103–123; these read LVAIGAGAALGANLRWLLGMW, GTLAANWLGAWLIGIAIALFA, FVVTGFLGALTTFSTFSAEMF, and IAVHVAGSLAMTGLGIATFGA. Positions 75 and 78 each coordinate Na(+).

The protein belongs to the fluoride channel Fluc/FEX (TC 1.A.43) family.

It localises to the cell inner membrane. It catalyses the reaction fluoride(in) = fluoride(out). Its activity is regulated as follows. Na(+) is not transported, but it plays an essential structural role and its presence is essential for fluoride channel function. Functionally, fluoride-specific ion channel. Important for reducing fluoride concentration in the cell, thus reducing its toxicity. This Chromohalobacter salexigens (strain ATCC BAA-138 / DSM 3043 / CIP 106854 / NCIMB 13768 / 1H11) protein is Fluoride-specific ion channel FluC.